Here is a 391-residue protein sequence, read N- to C-terminus: Elongation factor Tu (391 aa).

The region spanning 10–201 is the tr-type G domain; that stretch reads KPHVNIGTIG…AVDEYIPTPA (192 aa). Positions 19-26 are G1; the sequence is GHVDHGKT. Residue 19 to 26 coordinates GTP; it reads GHVDHGKT. Thr-26 serves as a coordination point for Mg(2+). A G2 region spans residues 55–59; it reads GITIS. Residues 76–79 form a G3 region; it reads DCPG. GTP contacts are provided by residues 76-80 and 131-134; these read DCPGH and NKVD. The G4 stretch occupies residues 131–134; the sequence is NKVD. The tract at residues 169–171 is G5; the sequence is SAL.

Belongs to the TRAFAC class translation factor GTPase superfamily. Classic translation factor GTPase family. EF-Tu/EF-1A subfamily. Monomer.

It is found in the cytoplasm. It catalyses the reaction GTP + H2O = GDP + phosphate + H(+). In terms of biological role, GTP hydrolase that promotes the GTP-dependent binding of aminoacyl-tRNA to the A-site of ribosomes during protein biosynthesis. The chain is Elongation factor Tu from Jannaschia sp. (strain CCS1).